Consider the following 309-residue polypeptide: Probable inactive poly [ADP-ribose] polymerase SRO5 (309 aa).

The 228-residue stretch at 28-255 folds into the PARP catalytic domain; that stretch reads CDSSSDRSFA…AFPVLIKALS (228 aa). The 72-residue stretch at 238 to 309 folds into the RST domain; that stretch reads KRLRSPWMAF…IKACGHKVQH (72 aa).

As to quaternary structure, interacts with dehydration-responsive DREB2 proteins and a number of transcription factors belonging to several protein families.

The protein resides in the nucleus matrix. In terms of biological role, probable inactive ADP-ribosyltransferase that may be involved in stress and developmental responses. The polypeptide is Probable inactive poly [ADP-ribose] polymerase SRO5 (SRO5) (Arabidopsis thaliana (Mouse-ear cress)).